The chain runs to 157 residues: SsrA-binding protein (157 aa).

The protein belongs to the SmpB family.

It is found in the cytoplasm. In terms of biological role, required for rescue of stalled ribosomes mediated by trans-translation. Binds to transfer-messenger RNA (tmRNA), required for stable association of tmRNA with ribosomes. tmRNA and SmpB together mimic tRNA shape, replacing the anticodon stem-loop with SmpB. tmRNA is encoded by the ssrA gene; the 2 termini fold to resemble tRNA(Ala) and it encodes a 'tag peptide', a short internal open reading frame. During trans-translation Ala-aminoacylated tmRNA acts like a tRNA, entering the A-site of stalled ribosomes, displacing the stalled mRNA. The ribosome then switches to translate the ORF on the tmRNA; the nascent peptide is terminated with the 'tag peptide' encoded by the tmRNA and targeted for degradation. The ribosome is freed to recommence translation, which seems to be the essential function of trans-translation. The sequence is that of SsrA-binding protein from Clostridium novyi (strain NT).